Here is a 355-residue protein sequence, read N- to C-terminus: Vacuolar protein sorting-associated protein 37C (355 aa).

Ser29 bears the Phosphoserine mark. Residues 78 to 167 form the VPS37 C-terminal domain; that stretch reads VERCQEQKAK…RKPRASQELA (90 aa). Positions 159 to 355 are disordered; it reads KPRASQELAG…PPPGPAWPGY (197 aa). 2 stretches are compositionally biased toward pro residues: residues 170–186 and 194–205; these read APPPRPPPPVRPVPQGT and PQPPSAMPPYPL. Positions 246–257 are enriched in low complexity; the sequence is PAAQPGPRGAAG. The segment covering 321-355 has biased composition (pro residues); it reads PGQPQPSVPLQPPYPPGPAPPYGFPPPPGPAWPGY.

The protein belongs to the VPS37 family. Component of the ESCRT-I complex (endosomal sorting complex required for transport I) which consists of TSG101, VPS28, a VPS37 protein (VPS37A to -D) and MVB12A or MVB12B in a 1:1:1:1 stoichiometry. Interacts with TSG101, VPS28, MVB12A and MVB12B. Component of the ESCRT-I complex (endosomal sorting complex required for transport I) which consists of TSG101, VPS28, a VPS37 protein (VPS37A to -D) and UBAP1 in a 1:1:1:1 stoichiometry. Interacts with HGS and STAM2. Interacts with CEP55. Post-translationally, phosphorylated by TBK1.

Its subcellular location is the late endosome membrane. Its function is as follows. Component of the ESCRT-I complex, a regulator of vesicular trafficking process. Required for the sorting of endocytic ubiquitinated cargos into multivesicular bodies. May be involved in cell growth and differentiation. The polypeptide is Vacuolar protein sorting-associated protein 37C (VPS37C) (Pongo abelii (Sumatran orangutan)).